Reading from the N-terminus, the 93-residue chain is Putative sodium channel toxin Ts41 (93 aa).

Positions 1-23 (MKIGVLFTIISMLCLLEVRKICS) are cleaved as a signal peptide. 4 disulfides stabilise this stretch: C22-C87, C39-C62, C48-C67, and C52-C69. The LCN-type CS-alpha/beta domain maps to 26–88 (EGGYPRYFSF…FWNVYRKYCK (63 aa)).

It belongs to the long (4 C-C) scorpion toxin superfamily. Expressed by the venom gland.

It is found in the secreted. Its function is as follows. The edited BmKBTx-like may modulate voltage-gated sodium channels (Nav). The non-edited form is able to form a heterodimer. In orthologs, a heterodimer with LVP beta-chain induces lipolysis in rat adipocytes, which is mediated through the beta-2 adrenergic receptor pathway (ADRB2). Since no LVP beta-chains have been identified in the venom of this scorpion, it is possible that this protein is not involved in a lipolysis process. The polypeptide is Putative sodium channel toxin Ts41 (Tityus serrulatus (Brazilian scorpion)).